Reading from the N-terminus, the 611-residue chain is UvrABC system protein C (611 aa).

The 78-residue stretch at 14 to 91 (TSPGCYIHKD…IKENQPKYNI (78 aa)) folds into the GIY-YIG domain. Residues 196–231 (DQIIEDLRGKMAGAAQAMEFEKAAEYRDLIQSIGTL) form the UVR domain. Residues 587 to 611 (KLNPKTQEQEQAQLREVAEPQIGLE) form a disordered region.

It belongs to the UvrC family. In terms of assembly, interacts with UvrB in an incision complex.

Its subcellular location is the cytoplasm. Functionally, the UvrABC repair system catalyzes the recognition and processing of DNA lesions. UvrC both incises the 5' and 3' sides of the lesion. The N-terminal half is responsible for the 3' incision and the C-terminal half is responsible for the 5' incision. The sequence is that of UvrABC system protein C from Streptococcus sanguinis (strain SK36).